An 881-amino-acid polypeptide reads, in one-letter code: Alanine--tRNA ligase (881 aa).

The Zn(2+) site is built by His565, His569, Cys672, and His676.

This sequence belongs to the class-II aminoacyl-tRNA synthetase family. Zn(2+) is required as a cofactor.

It is found in the cytoplasm. The enzyme catalyses tRNA(Ala) + L-alanine + ATP = L-alanyl-tRNA(Ala) + AMP + diphosphate. Its function is as follows. Catalyzes the attachment of alanine to tRNA(Ala) in a two-step reaction: alanine is first activated by ATP to form Ala-AMP and then transferred to the acceptor end of tRNA(Ala). Also edits incorrectly charged Ser-tRNA(Ala) and Gly-tRNA(Ala) via its editing domain. This Novosphingobium aromaticivorans (strain ATCC 700278 / DSM 12444 / CCUG 56034 / CIP 105152 / NBRC 16084 / F199) protein is Alanine--tRNA ligase.